Reading from the N-terminus, the 286-residue chain is Energy-coupling factor transporter ATP-binding protein EcfA2 (286 aa).

An ABC transporter domain is found at 3-246 (IQFNQVSYIY…KTQLLKWHIE (244 aa)). Residue 40–47 (GQTGSGKS) participates in ATP binding.

The protein belongs to the ABC transporter superfamily. Energy-coupling factor EcfA family. In terms of assembly, forms a stable energy-coupling factor (ECF) transporter complex composed of 2 membrane-embedded substrate-binding proteins (S component), 2 ATP-binding proteins (A component) and 2 transmembrane proteins (T component).

It is found in the cell membrane. Functionally, ATP-binding (A) component of a common energy-coupling factor (ECF) ABC-transporter complex. Unlike classic ABC transporters this ECF transporter provides the energy necessary to transport a number of different substrates. The polypeptide is Energy-coupling factor transporter ATP-binding protein EcfA2 (Staphylococcus epidermidis (strain ATCC 12228 / FDA PCI 1200)).